A 425-amino-acid chain; its full sequence is NAC transcription factor ONAC010 (425 aa).

Polar residues predominate over residues Met1–Ser10. The segment at Met1–Arg34 is disordered. The span at Pro12–Pro23 shows a compositional bias: low complexity. The region spanning Leu29–Lys200 is the NAC domain. A DNA-binding region spans residues Val129–Ala206.

It is found in the nucleus. Its function is as follows. Transcription factor of the NAC family associated with male fertility. The protein is NAC transcription factor ONAC010 (ONAC010) of Oryza sativa subsp. indica (Rice).